The primary structure comprises 254 residues: 5'/3'-nucleotidase SurE (254 aa).

4 residues coordinate a divalent metal cation: aspartate 9, aspartate 10, serine 40, and asparagine 93.

This sequence belongs to the SurE nucleotidase family. A divalent metal cation is required as a cofactor.

The protein resides in the cytoplasm. The enzyme catalyses a ribonucleoside 5'-phosphate + H2O = a ribonucleoside + phosphate. It catalyses the reaction a ribonucleoside 3'-phosphate + H2O = a ribonucleoside + phosphate. The catalysed reaction is [phosphate](n) + H2O = [phosphate](n-1) + phosphate + H(+). Nucleotidase with a broad substrate specificity as it can dephosphorylate various ribo- and deoxyribonucleoside 5'-monophosphates and ribonucleoside 3'-monophosphates with highest affinity to 3'-AMP. Also hydrolyzes polyphosphate (exopolyphosphatase activity) with the preference for short-chain-length substrates (P20-25). Might be involved in the regulation of dNTP and NTP pools, and in the turnover of 3'-mononucleotides produced by numerous intracellular RNases (T1, T2, and F) during the degradation of various RNAs. This is 5'/3'-nucleotidase SurE from Photorhabdus laumondii subsp. laumondii (strain DSM 15139 / CIP 105565 / TT01) (Photorhabdus luminescens subsp. laumondii).